Consider the following 379-residue polypeptide: MSGELKRGLEGVLVAESKLSFIDGDAGQLVYCGYDIEDLARDASYEEVLYLLWHGALPTGEELDAFSDELAAHRDLDDGVLDVARELAEQDESPMAALRTLVSAMSAYDESADFEDVTDREVNLEKAKRITAKMPSVLAAYARFRRGDDYVEPDESLNHAANFLYMLNGEEPNEVLAETFDMALVLHADHGLNASTFSAMVTSSTLSDLYSAVTSAIGTLSGSLHGGANANVMRMLKDVDDSDMDPTEWVKDALDRGERVAGFGHRVYNVKDPRAKILGAKSEALGEAAGDMKWYEMSVAIEEYIGEEKGLAPNVDFYSASTYYQMGIPIDLYTPIFAVSRAGGWIAHVLEQYEDNRLIRPRARYTGEKDLDFTPVDER.

Catalysis depends on residues histidine 225, histidine 265, and aspartate 316.

The protein belongs to the citrate synthase family. Homodimer.

The catalysed reaction is oxaloacetate + acetyl-CoA + H2O = citrate + CoA + H(+). The protein operates within carbohydrate metabolism; tricarboxylic acid cycle; isocitrate from oxaloacetate: step 1/2. Functionally, might regulate the synthesis and function of enzymes involved in later enzymatic steps of Krebs cycle. This chain is Citrate synthase (citZ), found in Haloferax volcanii (strain ATCC 29605 / DSM 3757 / JCM 8879 / NBRC 14742 / NCIMB 2012 / VKM B-1768 / DS2) (Halobacterium volcanii).